The sequence spans 91 residues: RNA-binding protein Hfq (91 aa).

The region spanning 9–68 (DPYLNALRRERIPVSIYLVNGIKLQGQIESFDQFVILLKNTVNQMVYKHAISTVVPARSV) is the Sm domain. Residues 68–91 (VSHHNNNHHTTPTEAVENVETQAE) are disordered.

This sequence belongs to the Hfq family. As to quaternary structure, homohexamer.

Its function is as follows. RNA chaperone that binds small regulatory RNA (sRNAs) and mRNAs to facilitate mRNA translational regulation in response to envelope stress, environmental stress and changes in metabolite concentrations. Also binds with high specificity to tRNAs. This is RNA-binding protein Hfq from Haemophilus influenzae (strain 86-028NP).